We begin with the raw amino-acid sequence, 1486 residues long: Chromosome partition protein MukB (1486 aa).

34–41 contributes to the ATP binding site; that stretch reads GGNGAGKS. 3 coiled-coil regions span residues 334–418, 444–480, and 509–603; these read SDHL…QYNQ, LETFQAKEQEATEKMLSLEQKMSMAQTAHSQFEQAYQ, and RHLA…RAPV. A flexible hinge region spans residues 666–783; that stretch reads PGGSEDQRLN…EVPLFGRAAR (118 aa). Coiled-coil stretches lie at residues 835–923, 977–1115, and 1209–1266; these read EAEI…AKLE, EMLS…TAKA, and VEAI…QNVS.

The protein belongs to the SMC family. MukB subfamily. In terms of assembly, homodimerization via its hinge domain. Binds to DNA via its C-terminal region. Interacts, and probably forms a ternary complex, with MukE and MukF via its C-terminal region. The complex formation is stimulated by calcium or magnesium. Interacts with tubulin-related protein FtsZ.

The protein localises to the cytoplasm. Its subcellular location is the nucleoid. Plays a central role in chromosome condensation, segregation and cell cycle progression. Functions as a homodimer, which is essential for chromosome partition. Involved in negative DNA supercoiling in vivo, and by this means organize and compact chromosomes. May achieve or facilitate chromosome segregation by condensation DNA from both sides of a centrally located replisome during cell division. This Shigella sonnei (strain Ss046) protein is Chromosome partition protein MukB.